The primary structure comprises 250 residues: Adenosylcobinamide-GDP ribazoletransferase (250 aa).

Helical transmembrane passes span 32–52, 59–79, 113–133, 136–156, 185–205, and 230–250; these read KGIIYFPVVGGIIGALLMVAY, LAHSLSALLTVGFFVFLTGGL, GVLAMVFILLLKLYGIQGLGE, IYWGIILMPVMGRQAIVYGCY, LTFILAAMHLPSLIFALLLPI, and CELTEGCYLLFILLITGAGLF.

Belongs to the CobS family. Mg(2+) is required as a cofactor.

The protein resides in the cell membrane. The enzyme catalyses alpha-ribazole + adenosylcob(III)inamide-GDP = adenosylcob(III)alamin + GMP + H(+). It carries out the reaction alpha-ribazole 5'-phosphate + adenosylcob(III)inamide-GDP = adenosylcob(III)alamin 5'-phosphate + GMP + H(+). It functions in the pathway cofactor biosynthesis; adenosylcobalamin biosynthesis; adenosylcobalamin from cob(II)yrinate a,c-diamide: step 7/7. Functionally, joins adenosylcobinamide-GDP and alpha-ribazole to generate adenosylcobalamin (Ado-cobalamin). Also synthesizes adenosylcobalamin 5'-phosphate from adenosylcobinamide-GDP and alpha-ribazole 5'-phosphate. This is Adenosylcobinamide-GDP ribazoletransferase from Alkaliphilus metalliredigens (strain QYMF).